Reading from the N-terminus, the 373-residue chain is Flagellar P-ring protein (373 aa).

The N-terminal stretch at 1-26 (MKLFFRFLTLVAVLAMSLADVAPAWA) is a signal peptide.

It belongs to the FlgI family. The basal body constitutes a major portion of the flagellar organelle and consists of four rings (L,P,S, and M) mounted on a central rod.

The protein localises to the periplasm. It localises to the bacterial flagellum basal body. Assembles around the rod to form the L-ring and probably protects the motor/basal body from shearing forces during rotation. This chain is Flagellar P-ring protein, found in Rhizobium leguminosarum bv. trifolii (strain WSM2304).